A 736-amino-acid chain; its full sequence is Transcription regulator protein BACH1 (736 aa).

The 67-residue stretch at 34-100 (CDVTIFVEGQ…AYTAKLILSK (67 aa)) folds into the BTB domain. S196 carries the phosphoserine modification. A compositionally biased stretch (basic and acidic residues) spans 286 to 295 (MEPEETKKDP). Disordered regions lie at residues 286–312 (MEPEETKKDPASQCPTEKSEVTPFPHN) and 349–389 (KPLS…RSSV). Residues S364 and S445 each carry the phosphoserine modification. In terms of domain architecture, bZIP spans 557–620 (CIHDIRRRSK…GETKQNLTGL (64 aa)). Positions 562–578 (RRRSKNRIAAQRCRKRK) are basic motif. Residues 582–589 (IQNLESEI) are leucine-zipper. Positions 680 to 719 (LPPCARGNSEPGYARGQESQQMSTATSEQAGPAEQCRQSG) are disordered. Residues 696–708 (QESQQMSTATSEQ) are compositionally biased toward polar residues.

This sequence belongs to the bZIP family. CNC subfamily. Heterodimer of BACH1 and MAFK. In terms of processing, ubiquitinated by the SCF(FBXL17) complex or by the by the SCF(FBXO22) complex, leading to its degradation by the proteasome. Under oxidative stress, reactive oxygen species covalently modify cysteine residues on the bZIP domain of BACH1 and release it from chromatin. If the BTB domain of BACH1 remains intact, its beta1-alpha6 degron is recognized by FBXO22, promoting its ubiquitination and degradation. If the structural integrity of the beta1-alpha6 degron is compromised, FBXL17 will transiently associate with the BACH1 BTB dimer and remodel it into stably bound monomer for ubiquitination and degradation.

The protein localises to the nucleus. Transcriptional regulator that acts as a repressor or activator, depending on the context. Binds to NF-E2 DNA binding sites. Plays important roles in coordinating transcription activation and repression by MAFK. Together with MAF, represses the transcription of genes under the control of the NFE2L2 oxidative stress pathway. The sequence is that of Transcription regulator protein BACH1 from Homo sapiens (Human).